The sequence spans 718 residues: Polyribonucleotide nucleotidyltransferase (718 aa).

Residues Asp-497 and Asp-503 each contribute to the Mg(2+) site. A KH domain is found at 564-623 (PRLLTMRIDPDMIGLVIGPGGKTVKSITEQTKTKIDIDDDGTVTISASEAEQAERAKQLI). The S1 motif domain occupies 633–701 (GEVYVGRVTR…NKGRLNLTRL (69 aa)).

It belongs to the polyribonucleotide nucleotidyltransferase family. Mg(2+) serves as cofactor.

It localises to the cytoplasm. It catalyses the reaction RNA(n+1) + phosphate = RNA(n) + a ribonucleoside 5'-diphosphate. Its function is as follows. Involved in mRNA degradation. Catalyzes the phosphorolysis of single-stranded polyribonucleotides processively in the 3'- to 5'-direction. In Gloeothece citriformis (strain PCC 7424) (Cyanothece sp. (strain PCC 7424)), this protein is Polyribonucleotide nucleotidyltransferase.